The following is a 264-amino-acid chain: Transcription factor bHLH52 (264 aa).

A bHLH domain is found at 134 to 183 (RELSAQSIAARKRRRRITEKTQELGKLIPGSQKHNTAEMFNAAAKYVKFL).

Homodimer. In terms of tissue distribution, expressed constitutively in roots, leaves, stems, and flowers.

The protein resides in the nucleus. The sequence is that of Transcription factor bHLH52 (BHLH52) from Arabidopsis thaliana (Mouse-ear cress).